Here is a 909-residue protein sequence, read N- to C-terminus: Protein translocase subunit SecA (909 aa).

ATP contacts are provided by residues glutamine 87, 105 to 109, and aspartate 512; that span reads GEGKT. The tract at residues 863–909 is disordered; the sequence is LVGGGDEDDESIAAHTPMIRDGDKVGRNDPCPCGSGRKYKQCHGKLS. Basic and acidic residues predominate over residues 880–889; that stretch reads MIRDGDKVGR. Cysteine 893, cysteine 895, cysteine 904, and histidine 905 together coordinate Zn(2+). Positions 899–909 are enriched in basic residues; sequence RKYKQCHGKLS.

This sequence belongs to the SecA family. As to quaternary structure, monomer and homodimer. Part of the essential Sec protein translocation apparatus which comprises SecA, SecYEG and auxiliary proteins SecDF-YajC and YidC. The cofactor is Zn(2+).

Its subcellular location is the cell inner membrane. It is found in the cytoplasm. It carries out the reaction ATP + H2O + cellular proteinSide 1 = ADP + phosphate + cellular proteinSide 2.. Functionally, part of the Sec protein translocase complex. Interacts with the SecYEG preprotein conducting channel. Has a central role in coupling the hydrolysis of ATP to the transfer of proteins into and across the cell membrane, serving both as a receptor for the preprotein-SecB complex and as an ATP-driven molecular motor driving the stepwise translocation of polypeptide chains across the membrane. In Shewanella putrefaciens (strain CN-32 / ATCC BAA-453), this protein is Protein translocase subunit SecA.